The chain runs to 281 residues: 2,3,4,5-tetrahydropyridine-2,6-dicarboxylate N-succinyltransferase (281 aa).

Residues R108 and D145 each coordinate substrate.

This sequence belongs to the transferase hexapeptide repeat family. As to quaternary structure, homotrimer.

Its subcellular location is the cytoplasm. It catalyses the reaction (S)-2,3,4,5-tetrahydrodipicolinate + succinyl-CoA + H2O = (S)-2-succinylamino-6-oxoheptanedioate + CoA. It participates in amino-acid biosynthesis; L-lysine biosynthesis via DAP pathway; LL-2,6-diaminopimelate from (S)-tetrahydrodipicolinate (succinylase route): step 1/3. The sequence is that of 2,3,4,5-tetrahydropyridine-2,6-dicarboxylate N-succinyltransferase from Methylobacterium nodulans (strain LMG 21967 / CNCM I-2342 / ORS 2060).